Consider the following 542-residue polypeptide: Protein phosphatase 1G (542 aa).

G2 carries N-myristoyl glycine lipidation. The residue at position 22 (R22) is an Omega-N-methylarginine. The PPM-type phosphatase domain maps to 26–502 (PYGFSAMQGW…DNMTCIIICF (477 aa)). D60 and G61 together coordinate Mn(2+). 2 disordered regions span residues 117 to 136 (IAGR…DEDD) and 164 to 325 (CQKV…SDSG). At T122 the chain carries Phosphothreonine. Acidic residues-rich tracts occupy residues 123–136 (EDED…DEDD) and 259–309 (DSED…DEEM). An N6-acetyllysine modification is found at K380. Positions 438 and 493 each coordinate Mn(2+). The segment at 513 to 542 (ESGKRKLEEALSTEGAEDTGNSDKKKAKRD) is disordered. S524 bears the Phosphoserine mark.

The protein belongs to the PP2C family. Interacts with NOL3; may dephosphorylate NOL3. The cofactor is Mg(2+). Requires Mn(2+) as cofactor. As to expression, highly expressed in testis. Low level of expression in kidney. Also expressed in a number of tissues undergoing proliferation including embryo, uterus at pregnancy, placenta, and ovaries.

It localises to the nucleus. Its subcellular location is the membrane. The enzyme catalyses O-phospho-L-seryl-[protein] + H2O = L-seryl-[protein] + phosphate. It catalyses the reaction O-phospho-L-threonyl-[protein] + H2O = L-threonyl-[protein] + phosphate. Functionally, may be involved in regulation of cell cycle. This chain is Protein phosphatase 1G (Ppm1g), found in Mus musculus (Mouse).